A 375-amino-acid polypeptide reads, in one-letter code: Carbamoyl phosphate synthase small chain (375 aa).

The tract at residues Met-1 to Ile-184 is CPSase. Positions 44, 240, and 242 each coordinate L-glutamine. The Glutamine amidotransferase type-1 domain occupies Ile-188–Phe-375. Cys-268 acts as the Nucleophile in catalysis. 4 residues coordinate L-glutamine: Leu-269, Gln-272, Asn-310, and Tyr-313. Active-site residues include His-351 and Glu-353.

Belongs to the CarA family. Composed of two chains; the small (or glutamine) chain promotes the hydrolysis of glutamine to ammonia, which is used by the large (or ammonia) chain to synthesize carbamoyl phosphate. Tetramer of heterodimers (alpha,beta)4.

It catalyses the reaction hydrogencarbonate + L-glutamine + 2 ATP + H2O = carbamoyl phosphate + L-glutamate + 2 ADP + phosphate + 2 H(+). The enzyme catalyses L-glutamine + H2O = L-glutamate + NH4(+). It functions in the pathway amino-acid biosynthesis; L-arginine biosynthesis; carbamoyl phosphate from bicarbonate: step 1/1. Its pathway is pyrimidine metabolism; UMP biosynthesis via de novo pathway; (S)-dihydroorotate from bicarbonate: step 1/3. Functionally, small subunit of the glutamine-dependent carbamoyl phosphate synthetase (CPSase). CPSase catalyzes the formation of carbamoyl phosphate from the ammonia moiety of glutamine, carbonate, and phosphate donated by ATP, constituting the first step of 2 biosynthetic pathways, one leading to arginine and/or urea and the other to pyrimidine nucleotides. The small subunit (glutamine amidotransferase) binds and cleaves glutamine to supply the large subunit with the substrate ammonia. The sequence is that of Carbamoyl phosphate synthase small chain from Helicobacter pylori (strain J99 / ATCC 700824) (Campylobacter pylori J99).